Consider the following 96-residue polypeptide: MNNSEFSKIAETVIAHIADRIEEQNQDIDVDLQSDILSIDTTDGIYVINKQSAAKEIWLSSPVSGPYHFFYEQGKWKNRAGLELMSILTDELGIDF.

It belongs to the frataxin family.

In terms of biological role, involved in iron-sulfur (Fe-S) cluster assembly. May act as a regulator of Fe-S biogenesis. This Rickettsia bellii (strain RML369-C) protein is Iron-sulfur cluster assembly protein CyaY.